Consider the following 2293-residue polypeptide: Protein Ycf2 A (2293 aa).

1647–1654 (GSIGTGRS) is an ATP binding site.

Belongs to the Ycf2 family.

It is found in the plastid. The protein resides in the chloroplast stroma. Probable ATPase of unknown function. Its presence in a non-photosynthetic plant (Epifagus virginiana) and experiments in tobacco indicate that it has an essential function which is probably not related to photosynthesis. The chain is Protein Ycf2 A from Crucihimalaya wallichii (Rock-cress).